The following is a 307-amino-acid chain: ATP-dependent (S)-NAD(P)H-hydrate dehydratase (307 aa).

Positions 1-291 (MDHFIKLLPK…DEIPKLVRDV (291 aa)) constitute a YjeF C-terminal domain. Residues G96 and 150-156 (NIVEFSR) each bind (6S)-NADPHX. ATP contacts are provided by residues 194–198 (KGEVD) and 214–223 (SSLRRCGGQG). D224 contributes to the (6S)-NADPHX binding site.

It belongs to the NnrD/CARKD family. Mg(2+) serves as cofactor.

It carries out the reaction (6S)-NADHX + ATP = ADP + phosphate + NADH + H(+). It catalyses the reaction (6S)-NADPHX + ATP = ADP + phosphate + NADPH + H(+). Its function is as follows. Catalyzes the dehydration of the S-form of NAD(P)HX at the expense of ATP, which is converted to ADP. Together with NAD(P)HX epimerase, which catalyzes the epimerization of the S- and R-forms, the enzyme allows the repair of both epimers of NAD(P)HX, a damaged form of NAD(P)H that is a result of enzymatic or heat-dependent hydration. The protein is ATP-dependent (S)-NAD(P)H-hydrate dehydratase of Caenorhabditis elegans.